Reading from the N-terminus, the 120-residue chain is Protein CcdB (120 aa).

The 116-residue stretch at 3-118 (RVLVVDDAKF…KVLEAVSRVM (116 aa)) folds into the Response regulatory domain. Asp-53 bears the 4-aspartylphosphate mark.

This chain is Protein CcdB (ccdB), found in Bacillus subtilis (strain 168).